The chain runs to 239 residues: Mannose-P-dolichol utilization defect 1 protein homolog 1 (239 aa).

The next 6 membrane-spanning stretches (helical) occupy residues 25 to 45 (CLLPLISKLLGYFLVAASMTV), 62 to 82 (LSVVAFELEVIGYTISLAYCL), 91 to 111 (FGELAFLLIQALILVACIYYF), 123 to 143 (AILYFAIAPTVFAGKIDPFLF), 174 to 194 (LSFLTCLMNFGGALARVFTSI), and 202 to 222 (MLLGIVLSIFTNGIIMSQILL). A PQ-loop 1 domain is found at 27–93 (LPLISKLLGY…KDLPFSAFGE (67 aa)). The PQ-loop 2 domain maps to 150-205 (KHLIFLSARIPQIWKNFRNKSTGQLSFLTCLMNFGGALARVFTSIQEKAPLSMLLG).

Belongs to the MPDU1 (TC 2.A.43.3) family.

It is found in the membrane. The sequence is that of Mannose-P-dolichol utilization defect 1 protein homolog 1 from Arabidopsis thaliana (Mouse-ear cress).